The chain runs to 24 residues: Brevinin-1Bc (24 aa).

Residues cysteine 18 and cysteine 24 are joined by a disulfide bond.

Expressed by the skin glands.

It is found in the secreted. Functionally, antibacterial activity against Gram-positive bacterium S.aureus. In Lithobates berlandieri (Rio Grande leopard frog), this protein is Brevinin-1Bc.